Here is a 395-residue protein sequence, read N- to C-terminus: MRKIMYFGGTCQSPALPALIHPPAPPLQPSLDIKPFLPFPLDTAATVNLFPNFNAMDPIQKAVINHTFGFPLPHRKKQIISCNICQLRFNSDSQAAAHYKGTKHAKKLKALESMKNKQKSVTAKDSAKTTFTSITTNPITTSSDKTESTAGTQVIARSADMRKSSEVTTELTSNAEKSLTAAVAAGNNSSPPTETEEEKAKRLLYCSLCKVAVNSASQLEAHNSGTKHKTMLEARNGSGTIKAFPRAGMKGKGPVNKGNTGLQNKTFHCEICDVHVNSETQLKQHISSRRHKDRASGKPPKPKYSPYNKLQKAAHPLGVKLVFSKEPSKPLTPRILPNPLAAAAAAAAVAVNSPFSLRTAPAATLFQTSALPPALLRPAPGPIRTTHTPVLFSPY.

3 Matrin-type zinc fingers span residues 80-110 (ISCN…KLKA), 204-234 (LYCS…MLEA), and 267-297 (FHCE…RASG). The interval 282-308 (LKQHISSRRHKDRASGKPPKPKYSPYN) is disordered.

It is found in the nucleus. The chain is Zinc finger protein 385D (Znf385d) from Rattus norvegicus (Rat).